An 81-amino-acid polypeptide reads, in one-letter code: Photosystem I iron-sulfur center (81 aa).

2 consecutive 4Fe-4S ferredoxin-type domains span residues 2–31 (SHSVKIYDTCIGCTQCVRACPTDVLEMIPW) and 39–68 (IASAPRTEDCVGCKRCESACPTDFLSVRVY). Residues cysteine 11, cysteine 14, cysteine 17, cysteine 21, cysteine 48, cysteine 51, cysteine 54, and cysteine 58 each coordinate [4Fe-4S] cluster.

The eukaryotic PSI reaction center is composed of at least 11 subunits. [4Fe-4S] cluster serves as cofactor.

It localises to the plastid. Its subcellular location is the chloroplast thylakoid membrane. It carries out the reaction reduced [plastocyanin] + hnu + oxidized [2Fe-2S]-[ferredoxin] = oxidized [plastocyanin] + reduced [2Fe-2S]-[ferredoxin]. Functionally, apoprotein for the two 4Fe-4S centers FA and FB of photosystem I (PSI); essential for photochemical activity. FB is the terminal electron acceptor of PSI, donating electrons to ferredoxin. The C-terminus interacts with PsaA/B/D and helps assemble the protein into the PSI complex. Required for binding of PsaD and PsaE to PSI. PSI is a plastocyanin-ferredoxin oxidoreductase, converting photonic excitation into a charge separation, which transfers an electron from the donor P700 chlorophyll pair to the spectroscopically characterized acceptors A0, A1, FX, FA and FB in turn. In Acorus calamus (Sweet flag), this protein is Photosystem I iron-sulfur center.